We begin with the raw amino-acid sequence, 515 residues long: Glucose-6-phosphate 1-dehydrogenase (515 aa).

Ala-2 is modified (N-acetylalanine). Residue Ser-8 is modified to Phosphoserine. Thr-10 carries the post-translational modification Phosphothreonine. NADP(+) is bound by residues 38 to 45 (GASGDLAK) and Arg-72. An N6-acetyllysine modification is found at Lys-89. NADP(+) is bound by residues Tyr-147 and Lys-171. D-glucose 6-phosphate contacts are provided by residues Lys-171, 201–205 (HYLGK), Glu-239, and Asp-258. The residue at position 171 (Lys-171) is an N6-(2-hydroxyisobutyryl)lysine; alternate. N6-acetyllysine; alternate is present on Lys-171. The Proton acceptor role is filled by His-263. Arg-357 provides a ligand contact to NADP(+). D-glucose 6-phosphate is bound by residues Lys-360 and Arg-365. NADP(+)-binding residues include Lys-366, Arg-370, and Arg-393. Gln-395 contacts D-glucose 6-phosphate. NADP(+) contacts are provided by residues 401–403 (YTK) and 421–423 (DLT). Lys-403 bears the N6-acetyllysine mark. Residue Lys-432 is modified to N6-acetyllysine. Arg-487 contacts NADP(+). Lys-497 bears the N6-acetyllysine mark. NADP(+) is bound by residues Tyr-503 and Trp-509. A Phosphotyrosine modification is found at Tyr-503.

This sequence belongs to the glucose-6-phosphate dehydrogenase family. In terms of assembly, homotetramer; dimer of dimers. Interacts with SIRT2; the interaction is enhanced by H(2)O(2) treatment. Forms a ternary complex with ALDOB and TP53; this interaction is direct. ALDOB stabilizes the complex inhibiting G6PD activity and keeping oxidative pentose phosphate metabolism in check. Acetylated by ELP3 at Lys-403; acetylation inhibits its homodimerization and enzyme activity. Deacetylated by SIRT2 at Lys-403; deacetylation stimulates its enzyme activity.

The protein resides in the cytoplasm. It localises to the cytosol. The protein localises to the membrane. The enzyme catalyses D-glucose 6-phosphate + NADP(+) = 6-phospho-D-glucono-1,5-lactone + NADPH + H(+). It participates in carbohydrate degradation; pentose phosphate pathway; D-ribulose 5-phosphate from D-glucose 6-phosphate (oxidative stage): step 1/3. Functionally, cytosolic glucose-6-phosphate dehydrogenase that catalyzes the first and rate-limiting step of the oxidative branch within the pentose phosphate pathway/shunt, an alternative route to glycolysis for the dissimilation of carbohydrates and a major source of reducing power and metabolic intermediates for fatty acid and nucleic acid biosynthetic processes. The sequence is that of Glucose-6-phosphate 1-dehydrogenase (G6pdx) from Rattus norvegicus (Rat).